A 138-amino-acid polypeptide reads, in one-letter code: Basic phospholipase A2 DAV-N6 (138 aa).

An N-terminal signal peptide occupies residues 1–16; that stretch reads MRTLWIVAVLLVSVEG. 7 disulfides stabilise this stretch: cysteine 42–cysteine 131, cysteine 44–cysteine 60, cysteine 59–cysteine 111, cysteine 65–cysteine 138, cysteine 66–cysteine 104, cysteine 73–cysteine 97, and cysteine 91–cysteine 102. Ca(2+) contacts are provided by tyrosine 43, glycine 45, and glycine 47. Histidine 63 is a catalytic residue. Position 64 (aspartate 64) interacts with Ca(2+). Aspartate 105 is an active-site residue.

Requires Ca(2+) as cofactor. In terms of tissue distribution, expressed by the venom gland.

The protein localises to the secreted. It carries out the reaction a 1,2-diacyl-sn-glycero-3-phosphocholine + H2O = a 1-acyl-sn-glycero-3-phosphocholine + a fatty acid + H(+). Snake venom phospholipase A2 (PLA2) that inhibits neuromuscular transmission by blocking acetylcholine release from the nerve termini. PLA2 catalyzes the calcium-dependent hydrolysis of the 2-acyl groups in 3-sn-phosphoglycerides. This chain is Basic phospholipase A2 DAV-N6, found in Deinagkistrodon acutus (Hundred-pace snake).